A 100-amino-acid polypeptide reads, in one-letter code: MDFSQLGGLSGLLDGMKKEFSQLEEKNKDTIHTSKSGGGMVSVSFNGLGELVDLQIDDSLLEDKEAMQIYLMSALNDGYKAVEENRKNLAFNMLGNFAKL.

This sequence belongs to the YbaB/EbfC family. In terms of assembly, homodimer.

The protein resides in the cytoplasm. It localises to the nucleoid. In terms of biological role, binds to DNA and alters its conformation. May be involved in regulation of gene expression, nucleoid organization and DNA protection. In Helicobacter pylori (strain G27), this protein is Nucleoid-associated protein HPG27_32.